A 1046-amino-acid polypeptide reads, in one-letter code: Piwi-like protein 2 (1046 aa).

Positions 1-12 are enriched in pro residues; the sequence is MDPKRPTFPSPP. A disordered region spans residues 1–35; sequence MDPKRPTFPSPPGVIRAPWQQSTEDQSQLLDQPSL. Residues 19-31 show a composition bias toward polar residues; that stretch reads WQQSTEDQSQLLD. The PAZ domain occupies 462–575; the sequence is SVLDVMNLIY…LLPELSFMTG (114 aa). The Piwi domain occupies 741–1032; it reads LVVCIMTGNR…LAFLSGQYLH (292 aa). Catalysis depends on residues D818, E856, D888, and H1021.

Belongs to the argonaute family. Piwi subfamily. As to quaternary structure, component of the PET complex. It depends on Mg(2+) as a cofactor. Post-translationally, methylated on arginine residues; required for the interaction with Tudor domain-containing protein and subsequent localization to the meiotic nuage, also named P granule. Detected in primordial germ cells (PGCs) from 3 dpf. In adult, it is found in both the female and male gonad. In the ovary, it is present in all stages of germ cell differentiation. In testis, it is present in mitotic and meiotic germ cells. No protein has been detected in the fully differentiated sperm cell.

Its subcellular location is the cytoplasm. The protein localises to the nucleus. Endoribonuclease that plays a central role during spermatogenesis by repressing transposable elements and preventing their mobilization, which is essential for the germline integrity. Plays an essential role in germ cell differentiation and meiosis, independently of the function in transposable elements repression. Acts via the piRNA metabolic process, which mediates the repression of transposable elements during meiosis by forming complexes composed of piRNAs and Piwi proteins and govern the methylation and subsequent repression of transposons. During piRNA biosynthesis, plays a key role in the piRNA amplification loop, also named ping-pong amplification cycle, by acting as a 'slicer-competent' piRNA endoribonuclease that cleaves primary piRNAs, which are then loaded onto 'slicer-incompetent' piwil4. Piwil2 slicing produces a pre-miRNA intermediate, which is then processed in mature piRNAs, and as well as a 16 nucleotide by-product that is degraded. Required for piwil4/miwi2 nuclear localization and association with secondary piRNAs antisense. Represses circadian rhythms by promoting the stability and activity of core clock components BMAL1 and CLOCK. This is Piwi-like protein 2 (piwil2) from Danio rerio (Zebrafish).